A 196-amino-acid chain; its full sequence is MKFAVFASLLASRAAFAPAQQSARTSVATNMAFENEIGAQQPLGYWDPLGLVADGNQEKFDRLRYVEIKHGRICMLAVAGYLTQEAGIRLPGDIDYSGTSFESIPNGFAALSAVPGAGIAQIIAFIGFFEIAVMKDITGGEFVGDFRNNYLDFGWDTFSEDKKLQKRAIELNQGRAAQMGILALMVHEQLGVSILP.

The N-terminal 31 residues, 1 to 31, are a transit peptide targeting the chloroplast; it reads MKFAVFASLLASRAAFAPAQQSARTSVATNM. The next 3 helical transmembrane spans lie at 73-94, 114-134, and 174-196; these read ICML…PGDI, VPGA…IAVM, and GRAA…SILP.

It belongs to the fucoxanthin chlorophyll protein family. In terms of assembly, the LHC complex of chromophytic algae is composed of fucoxanthin, chlorophyll A and C bound non-covalently by fucoxanthin chlorophyll proteins (FCPs). The ratio of the pigments in LHC; fucoxanthin: chlorophyll C: chlorophyll A; (0.6-1): (0.1-0.3): (1).

It is found in the plastid. The protein resides in the chloroplast thylakoid membrane. Its function is as follows. The light-harvesting complex (LHC) functions as a light receptor, it captures and delivers excitation energy to photosystems with which it is closely associated. Energy is transferred from the carotenoid and chlorophyll C (or B) to chlorophyll A and the photosynthetic reaction centers where it is used to synthesize ATP and reducing power. This chain is Fucoxanthin-chlorophyll a-c binding protein A, chloroplastic (FCPA), found in Phaeodactylum tricornutum (Diatom).